A 646-amino-acid chain; its full sequence is DNA mismatch repair protein MutL (646 aa).

Disordered stretches follow at residues 356 to 380 (FENR…NENS) and 415 to 452 (TKNS…AKPH). Low complexity predominate over residues 424–436 (SEATSNEAASAEI).

Belongs to the DNA mismatch repair MutL/HexB family.

Its function is as follows. This protein is involved in the repair of mismatches in DNA. It is required for dam-dependent methyl-directed DNA mismatch repair. May act as a 'molecular matchmaker', a protein that promotes the formation of a stable complex between two or more DNA-binding proteins in an ATP-dependent manner without itself being part of a final effector complex. The polypeptide is DNA mismatch repair protein MutL (Staphylococcus carnosus (strain TM300)).